A 242-amino-acid polypeptide reads, in one-letter code: N-alpha-acetyltransferase 60 (242 aa).

Residues 1–192 (MTEVVPSSAL…GGHPPWTILD (192 aa)) lie on the Cytoplasmic side of the membrane. The 170-residue stretch at 13–182 (VSLRLLCHDD…DGFTYVLYIN (170 aa)) folds into the N-acetyltransferase domain. Tyr38 lines the substrate pocket. The residue at position 79 (Lys79) is an N6-acetyllysine; by autocatalysis. Tyr97 is a catalytic residue. Leu99 serves as a coordination point for substrate. 101–103 (LGV) lines the acetyl-CoA pocket. An N6-acetyllysine; by autocatalysis mark is found at Lys105, Lys109, and Lys121. 109–114 (KHGIGS) contacts acetyl-CoA. The active site involves His138. Acetyl-CoA-binding positions include Asn143 and 150 to 153 (YENR). The segment at 162–173 (PYYYSIRGVLKD) is required for homodimerization. Tyr165 contacts substrate. Positions 193–236 (YIQHLGSALANLSPCSIPHRIYRQAHSLLCSFLPWSSISSKGGI) form an intramembrane region, helical. The Cytoplasmic portion of the chain corresponds to 237-242 (EYSRTM).

Belongs to the acetyltransferase family. NAA60 subfamily. Monomer and homodimer; monomer in presence of substrate and homodimer in its absence. Acetylated: autoacetylation is required for optimal acetyltransferase activity.

It localises to the golgi apparatus membrane. It catalyses the reaction N-terminal L-methionyl-[transmembrane protein] + acetyl-CoA = N-terminal N(alpha)-acetyl-L-methionyl-[transmembrane protein] + CoA + H(+). The enzyme catalyses L-lysyl-[protein] + acetyl-CoA = N(6)-acetyl-L-lysyl-[protein] + CoA + H(+). N-alpha-acetyltransferase that specifically mediates the acetylation of N-terminal residues of the transmembrane proteins, with a strong preference for N-termini facing the cytosol. Displays N-terminal acetyltransferase activity towards a range of N-terminal sequences including those starting with Met-Lys, Met-Val, Met-Ala and Met-Met. Required for normal chromosomal segregation during anaphase. May also show histone acetyltransferase activity; such results are however unclear in vivo and would require additional experimental evidences. This is N-alpha-acetyltransferase 60 (Naa60) from Rattus norvegicus (Rat).